We begin with the raw amino-acid sequence, 348 residues long: Small ribosomal subunit biogenesis GTPase RsgA (348 aa).

The interval 1-32 (MAKQKLTQNQKRRIHSNNAKALDRHRRQTKKQ) is disordered. The 169-residue stretch at 106 to 274 (KNELSRPDYY…LIDSPGIREF (169 aa)) folds into the CP-type G domain. GTP-binding positions include 162-165 (NKID) and 216-224 (GQSGVGKSS). Positions 298, 303, 305, and 311 each coordinate Zn(2+).

Belongs to the TRAFAC class YlqF/YawG GTPase family. RsgA subfamily. As to quaternary structure, monomer. Associates with 30S ribosomal subunit, binds 16S rRNA. Requires Zn(2+) as cofactor.

It is found in the cytoplasm. One of several proteins that assist in the late maturation steps of the functional core of the 30S ribosomal subunit. Helps release RbfA from mature subunits. May play a role in the assembly of ribosomal proteins into the subunit. Circularly permuted GTPase that catalyzes slow GTP hydrolysis, GTPase activity is stimulated by the 30S ribosomal subunit. In Actinobacillus succinogenes (strain ATCC 55618 / DSM 22257 / CCUG 43843 / 130Z), this protein is Small ribosomal subunit biogenesis GTPase RsgA.